The primary structure comprises 89 residues: Small ribosomal subunit protein uS15 (89 aa).

This sequence belongs to the universal ribosomal protein uS15 family. Part of the 30S ribosomal subunit. Forms a bridge to the 50S subunit in the 70S ribosome, contacting the 23S rRNA.

In terms of biological role, one of the primary rRNA binding proteins, it binds directly to 16S rRNA where it helps nucleate assembly of the platform of the 30S subunit by binding and bridging several RNA helices of the 16S rRNA. Functionally, forms an intersubunit bridge (bridge B4) with the 23S rRNA of the 50S subunit in the ribosome. The chain is Small ribosomal subunit protein uS15 from Azotobacter vinelandii (strain DJ / ATCC BAA-1303).